A 493-amino-acid polypeptide reads, in one-letter code: Glutamate--tRNA ligase (493 aa).

Residues 10–20 (PSPTGDPHVGT) carry the 'HIGH' region motif. Residues 251–255 (KLSKR) carry the 'KMSKS' region motif. K254 contacts ATP.

This sequence belongs to the class-I aminoacyl-tRNA synthetase family. Glutamate--tRNA ligase type 1 subfamily. Monomer.

Its subcellular location is the cytoplasm. The catalysed reaction is tRNA(Glu) + L-glutamate + ATP = L-glutamyl-tRNA(Glu) + AMP + diphosphate. In terms of biological role, catalyzes the attachment of glutamate to tRNA(Glu) in a two-step reaction: glutamate is first activated by ATP to form Glu-AMP and then transferred to the acceptor end of tRNA(Glu). In Pseudomonas savastanoi pv. phaseolicola (strain 1448A / Race 6) (Pseudomonas syringae pv. phaseolicola (strain 1448A / Race 6)), this protein is Glutamate--tRNA ligase.